Consider the following 400-residue polypeptide: Forkhead box protein A4-B (400 aa).

A DNA-binding region (fork-head) is located at residues 119 to 213 (KPPYSYISLI…ENGCYLRRQK (95 aa)). The segment covering 218-234 (ERSKSGEGERKGNKPGD) has biased composition (basic and acidic residues). The segment at 218–290 (ERSKSGEGER…VGFSPTSEQA (73 aa)) is disordered. 2 stretches are compositionally biased toward polar residues: residues 249–258 (DCSSSRSPQA) and 267–277 (STGSSIHQATG).

In terms of tissue distribution, primarily expressed in the dorsal blastopore lip (Spemann organizer) of early gastrulae. At later stages, expressed in the dorsal mesoderm and the neural floor plate. In the dorsal mesoderm, expressed in the notochord but not in the presomitic mesoderm. Also expressed in the mid-brain area.

Its subcellular location is the nucleus. In terms of biological role, transcriptional repressor involved in embryonic nervous system development. Plays a role in the induction and patterning of the anterior-posterior neural axis. Involved in the establishment of floor plate differentiation from neural plate cells during gastrulation. Binds the anf1 promoter sequence to restrict expression of anf1 to the anterior of the neural plate, thereby patterning the forebrain. Can bind to the HNF-3-alpha DNA target sequence. Cooperates with t/bra in a dose-dependent manner to specify dorsal mesoderm formation, including notochord. May be involved in the dorso-ventral patterning of the mesoderm. Binds to DNA via the target sequence 5'-[GA]TAAA[TC]A-3', with 5'-GTAAATA-3' being the preferred binding site. The protein is Forkhead box protein A4-B (foxa4-b) of Xenopus laevis (African clawed frog).